A 317-amino-acid chain; its full sequence is Anamorsin homolog (317 aa).

The N-terminal SAM-like domain stretch occupies residues 1–192; it reads MREVLVVSES…ITGVRPNWKA (192 aa). Residues 193-216 form a linker region; sequence KGDRKSSSIHAAPIDGYISKAPDY. [2Fe-2S] cluster-binding residues include Cys219, Cys226, Cys229, and Cys231. Residues 219–231 form a fe-S binding site A region; that stretch reads CSTKPRACANCTC. The [4Fe-4S] cluster site is built by Cys286, Cys289, Cys297, and Cys300. 2 short sequence motifs (cx2C motif) span residues 286–289 and 297–300; these read CGNC and CDSC. The tract at residues 286-300 is fe-S binding site B; sequence CGNCYLGDAFRCDSC.

Belongs to the anamorsin family. As to quaternary structure, monomer. Requires [2Fe-2S] cluster as cofactor. The cofactor is [4Fe-4S] cluster.

The protein resides in the cytoplasm. Its subcellular location is the mitochondrion intermembrane space. In terms of biological role, component of the cytosolic iron-sulfur (Fe-S) protein assembly (CIA) machinery. Required for the maturation of extramitochondrial Fe-S proteins. Part of an electron transfer chain functioning in an early step of cytosolic Fe-S biogenesis, facilitating the de novo assembly of a [4Fe-4S] cluster on the cytosolic Fe-S scaffold complex. Electrons are transferred from NADPH via a FAD- and FMN-containing diflavin oxidoreductase. Together with the diflavin oxidoreductase, also required for the assembly of the diferric tyrosyl radical cofactor of ribonucleotide reductase (RNR), probably by providing electrons for reduction during radical cofactor maturation in the catalytic small subunit. In Theileria parva (East coast fever infection agent), this protein is Anamorsin homolog.